The chain runs to 271 residues: Ribonuclease HII (271 aa).

Residues 84 to 271 form the RNase H type-2 domain; that stretch reads VLIAGVDEVG…HRMSFLSNYI (188 aa). 3 residues coordinate a divalent metal cation: Asp90, Glu91, and Asp187.

This sequence belongs to the RNase HII family. Mn(2+) serves as cofactor. It depends on Mg(2+) as a cofactor.

Its subcellular location is the cytoplasm. It catalyses the reaction Endonucleolytic cleavage to 5'-phosphomonoester.. Endonuclease that specifically degrades the RNA of RNA-DNA hybrids. The polypeptide is Ribonuclease HII (Clostridium tetani (strain Massachusetts / E88)).